Reading from the N-terminus, the 335-residue chain is Probable cytosolic iron-sulfur protein assembly protein Ciao1 (335 aa).

WD repeat units follow at residues 12–51, 57–96, 101–140, 146–185, 192–231, 250–289, and 301–335; these read GHKG…WSTK, GHKR…FECN, GHEN…EFEC, SHTQ…NDWD, SHTS…NSAG, QHSR…KPDE, and AHDQ…KVTE.

The protein belongs to the WD repeat CIA1 family.

Functionally, essential component of the cytosolic iron-sulfur (Fe/S) protein assembly machinery. Required for the maturation of extramitochondrial Fe/S proteins. The chain is Probable cytosolic iron-sulfur protein assembly protein Ciao1 from Drosophila erecta (Fruit fly).